A 228-amino-acid chain; its full sequence is ATP synthase F(0) complex subunit a (228 aa).

6 helical membrane passes run 13-33 (YFLG…TMFI), 70-90 (WALL…TGLL), 100-120 (LSLN…MGAT), 140-160 (APFL…ALGV), 162-182 (LTAN…ALIN), and 190-210 (LFLT…VSFI).

It belongs to the ATPase A chain family. Component of the ATP synthase complex composed at least of ATP5F1A/subunit alpha, ATP5F1B/subunit beta, ATP5MC1/subunit c (homooctomer), MT-ATP6/subunit a, MT-ATP8/subunit 8, ATP5ME/subunit e, ATP5MF/subunit f, ATP5MG/subunit g, ATP5MK/subunit k, ATP5MJ/subunit j, ATP5F1C/subunit gamma, ATP5F1D/subunit delta, ATP5F1E/subunit epsilon, ATP5PF/subunit F6, ATP5PB/subunit b, ATP5PD/subunit d, ATP5PO/subunit OSCP. ATP synthase complex consists of a soluble F(1) head domain (subunits alpha(3) and beta(3)) - the catalytic core - and a membrane F(0) domain - the membrane proton channel (subunits c, a, 8, e, f, g, k and j). These two domains are linked by a central stalk (subunits gamma, delta, and epsilon) rotating inside the F1 region and a stationary peripheral stalk (subunits F6, b, d, and OSCP). Interacts with DNAJC30; interaction is direct.

The protein resides in the mitochondrion inner membrane. The enzyme catalyses H(+)(in) = H(+)(out). Functionally, subunit a, of the mitochondrial membrane ATP synthase complex (F(1)F(0) ATP synthase or Complex V) that produces ATP from ADP in the presence of a proton gradient across the membrane which is generated by electron transport complexes of the respiratory chain. ATP synthase complex consist of a soluble F(1) head domain - the catalytic core - and a membrane F(1) domain - the membrane proton channel. These two domains are linked by a central stalk rotating inside the F(1) region and a stationary peripheral stalk. During catalysis, ATP synthesis in the catalytic domain of F(1) is coupled via a rotary mechanism of the central stalk subunits to proton translocation. With the subunit c (ATP5MC1), forms the proton-conducting channel in the F(0) domain, that contains two crucial half-channels (inlet and outlet) that facilitate proton movement from the mitochondrial intermembrane space (IMS) into the matrix. Protons are taken up via the inlet half-channel and released through the outlet half-channel, following a Grotthuss mechanism. This Myxine glutinosa (Atlantic hagfish) protein is ATP synthase F(0) complex subunit a.